We begin with the raw amino-acid sequence, 123 residues long: Hydrogenase maturation factor HypA (123 aa).

Histidine 2 serves as a coordination point for Ni(2+). Zn(2+) is bound by residues cysteine 77, cysteine 80, cysteine 96, and cysteine 99.

Belongs to the HypA/HybF family.

In terms of biological role, involved in the maturation of [NiFe] hydrogenases. Required for nickel insertion into the metal center of the hydrogenase. This Methanococcus aeolicus (strain ATCC BAA-1280 / DSM 17508 / OCM 812 / Nankai-3) protein is Hydrogenase maturation factor HypA.